Consider the following 1032-residue polypeptide: Protein phosphatase 1 regulatory subunit 12A (1032 aa).

A KVKF motif motif is present at residues 35–38; it reads KVKF. ANK repeat units lie at residues 39-68, 72-101, 105-134, 138-164, 198-227, and 231-260; these read DDGAVFLAACSSGDTDEVLKLLHRGADINY, DGLTALHQACIDDNVDMVKFLVENGANINQ, EGWIPLHAAASCGYLDIAEFLIGQGAHVGA, EGDTPLDIAEEEAMEELLQNEVNRQGV, SGGTALHVAAAKGYTEVLKLLIQAGYDVNI, and DGWTPLHAAAHWGKEEACRILVDNLCDMET. (3S)-3-hydroxyasparagine; by HIF1AN is present on residues Asn67 and Asn100. Asn226 carries the (3S)-3-hydroxyasparagine; by HIF1AN modification. Disordered stretches follow at residues 290 to 553 and 588 to 928; these read LHSE…HRSC and SSTS…RLEK. Positions 291-300 are enriched in basic and acidic residues; the sequence is HSEKRDKKSP. The residue at position 299 (Ser299) is a Phosphoserine. Positions 302 to 316 are enriched in polar residues; the sequence is IESTANMENNQPQKT. Residues 318-340 show a composition bias toward basic and acidic residues; the sequence is KNKETLIIEPEKNASRIESLEQE. Acidic residues predominate over residues 357–369; the sequence is SEEDEEDDSESEA. Low complexity predominate over residues 383–399; that stretch reads AHTASTQAAPAAVTTPT. Residues 400–421 are compositionally biased toward polar residues; the sequence is LSSNQGTPTSPVKKFPTSTTKI. Phosphoserine is present on residues Ser422 and Ser432. Residues 422–432 are compositionally biased toward basic and acidic residues; the sequence is SPKEEERKDES. At Thr443 the chain carries Phosphothreonine. Ser445 bears the Phosphoserine mark. Tyr446 carries the post-translational modification Phosphotyrosine. Over residues 469–480 the composition is skewed to low complexity; that stretch reads RSASSPRLSSSL. At Ser472 the chain carries Phosphoserine; by NUAK1. Ser473 is subject to Phosphoserine; by CDK1. The residue at position 477 (Ser477) is a Phosphoserine. Positions 481–491 are enriched in basic and acidic residues; it reads DNKEKEKDNKG. Phosphoserine is present on residues Ser507 and Ser509. Residues 540–551 show a composition bias toward polar residues; sequence NSSINEGSTYHR. Phosphoserine is present on Ser601. Over residues 602-612 the composition is skewed to polar residues; sequence PAGTQSSTSNR. The segment covering 614-625 has biased composition (basic and acidic residues); that stretch reads WAEDSTEKEKDS. The residue at position 618 (Ser618) is a Phosphoserine. The segment covering 633 to 661 has biased composition (low complexity); sequence LVAPTVVSAAASSTTALTTTTAGTLSSTS. The span at 674–683 shows a compositional bias: basic and acidic residues; that stretch reads VRDEESESQR. Positions 683–866 are interaction with ROCK2; that stretch reads RKARSRQARQ…VSFWTQDSDE (184 aa). Residues 684–694 show a composition bias toward basic residues; that stretch reads KARSRQARQSR. Phosphoserine; by PKA and PKG; in vitro is present on residues Ser693 and Ser696. Phosphothreonine; by ROCK1, ROCK2, CDC42BP, ZIPK/DAPK3 and RAF1 is present on Thr697. Residues 719–768 show a composition bias toward basic and acidic residues; sequence RTREQENEEKDKEEKEKQDKEKQEEKKESEVSREDEYKQKYSRTYDETYA. Residues 774 to 797 are compositionally biased toward low complexity; sequence STSSSSTPSSSSLSTLGSSLYASS. Over residues 798–812 the composition is skewed to polar residues; sequence QLNRPNSLVGITSAY. Ser804 bears the Phosphoserine mark. The span at 816–842 shows a compositional bias: basic and acidic residues; it reads LTKDNEREGEKKEEEKEGEDKSQPKSI. Residues 843 to 854 show a composition bias toward basic residues; the sequence is RERRRPREKRRS. Ser854 bears the Phosphoserine; by ROCK2 mark. Residues Ser864 and Ser873 each carry the phosphoserine modification. The span at 869-885 shows a compositional bias: basic and acidic residues; sequence QERQSDTEDGSSKRDTQ. Low complexity predominate over residues 886 to 900; sequence TDSVSRYDSSSTSSS. Ser905 and Ser910 each carry phosphoserine. Ser912 is subject to Phosphoserine; by NUAK1. The segment covering 916–928 has biased composition (basic and acidic residues); sequence LEERKPYGSRLEK. Ser997 carries the post-translational modification Phosphoserine.

PP1 comprises a catalytic subunit, PPP1CA, PPP1CB or PPP1CC, and one or several targeting or regulatory subunits. PPP1R12A mediates binding to myosin. Interacts with ARHA and CIT. Binds PPP1R12B, ROCK1 and IL16. Interacts directly with PRKG1. Non-covalent dimer of 2 dimers; PRKG1-PRKG1 and PPP1R12A-PPP1R12A. Interacts with SMTNL1. Interacts with PPP1CB; the interaction is direct. Interacts (when phosphorylated at Ser-445, Ser-472 and Ser-910) with 14-3-3. Interacts with ROCK1 and ROCK2. Interacts with isoform 1 and isoform 2 of ZIPK/DAPK3. Interacts with RAF1. Interacts with HIF1AN. Interacts with NCKAP1L. In terms of processing, phosphorylated on upon DNA damage, probably by ATM or ATR. Phosphorylated by CIT (Rho-associated kinase). Phosphorylated cooperatively by ROCK1 and CDC42BP on Thr-697. In vitro, phosphorylation of Ser-696 by PKA and PKG appears to prevent phosphorylation of the inhibitory site Thr-697, probably mediated by PRKG1. May be phosphorylated at Thr-697 by DMPK; may inhibit the myosin phosphatase activity. Phosphorylated at Ser-473 by CDK1 during mitosis, creating docking sites for the POLO box domains of PLK1. Subsequently, PLK1 binds and phosphorylates PPP1R12A. In terms of tissue distribution, smooth muscle. Detected in aorta, portal vein, stomach, intestine, bladder and lung.

It is found in the cytoplasm. Its subcellular location is the cytoskeleton. It localises to the stress fiber. In terms of biological role, key regulator of protein phosphatase 1C (PPP1C). Mediates binding to myosin. As part of the PPP1C complex, involved in dephosphorylation of PLK1. Capable of inhibiting HIF1AN-dependent suppression of HIF1A activity. The polypeptide is Protein phosphatase 1 regulatory subunit 12A (Rattus norvegicus (Rat)).